Reading from the N-terminus, the 157-residue chain is MRIGHGYDVHRFCDGDFITLGGVRIPHKYGLLAHSDGDVLLHALSDALLGAAALGDIGKHFPDTDPQFKGADSRALLRHVVGIVKAKGWKVGNVDATIVAQAPKMAPHIETMRQLIAEDLQVELDQVNVKATTTEKLGFTGREEGIAVHSVALLLPA.

A divalent metal cation-binding residues include D8 and H10. 4-CDP-2-C-methyl-D-erythritol 2-phosphate contacts are provided by residues 8 to 10 (DVH) and 34 to 35 (HS). Position 42 (H42) interacts with a divalent metal cation. 4-CDP-2-C-methyl-D-erythritol 2-phosphate-binding positions include 56–58 (DIG), 61–65 (FPDTD), 100–106 (AQAPKMA), 132–135 (TTTE), F139, and R142.

This sequence belongs to the IspF family. In terms of assembly, homotrimer. Requires a divalent metal cation as cofactor.

The catalysed reaction is 4-CDP-2-C-methyl-D-erythritol 2-phosphate = 2-C-methyl-D-erythritol 2,4-cyclic diphosphate + CMP. It functions in the pathway isoprenoid biosynthesis; isopentenyl diphosphate biosynthesis via DXP pathway; isopentenyl diphosphate from 1-deoxy-D-xylulose 5-phosphate: step 4/6. Functionally, involved in the biosynthesis of isopentenyl diphosphate (IPP) and dimethylallyl diphosphate (DMAPP), two major building blocks of isoprenoid compounds. Catalyzes the conversion of 4-diphosphocytidyl-2-C-methyl-D-erythritol 2-phosphate (CDP-ME2P) to 2-C-methyl-D-erythritol 2,4-cyclodiphosphate (ME-CPP) with a corresponding release of cytidine 5-monophosphate (CMP). This is 2-C-methyl-D-erythritol 2,4-cyclodiphosphate synthase from Pseudomonas putida (strain ATCC 700007 / DSM 6899 / JCM 31910 / BCRC 17059 / LMG 24140 / F1).